Here is a 226-residue protein sequence, read N- to C-terminus: EHVSVFVIFAQTHEPSGECMFEFDEDEVFHVDLDKKQAIWYLPEFGRMFSVEAQGGLANIAAAKSNLNACIQHSNHTQAPNEPPEVIVFPKEPVELGQPNTLICHIDKFFPPVLNVTWLRNGQPVTEGVSETVFLASTEFRFRKFHYLAFVPSAADVYDCRVEHWGLDAPLLTHWEAQEPIQMPETTETVVCALGLVVGLAGVVVGIVLITKALRSSPDPRARRPL.

Residues 1 to 189 (EHVSVFVIFA…PIQMPETTET (189 aa)) are Extracellular-facing. Asn-75 and Asn-115 each carry an N-linked (GlcNAc...) asparagine glycan. The Ig-like C1-type domain maps to 84-176 (PEVIVFPKEP…LDAPLLTHWE (93 aa)). An intrachain disulfide couples Cys-104 to Cys-160. Residues 190-210 (VVCALGLVVGLAGVVVGIVLI) form a helical membrane-spanning segment. Residues 211–226 (TKALRSSPDPRARRPL) are Cytoplasmic-facing.

The protein belongs to the MHC class II family.

It localises to the membrane. This is RLA class II histocompatibility antigen, DP alpha-1 chain from Oryctolagus cuniculus (Rabbit).